Here is a 395-residue protein sequence, read N- to C-terminus: Innexin inx3 (395 aa).

Topologically, residues 1–37 (MAVFGMVSAVSGFIKIRYLLDKAVIDNMVFRCHYRIT) are cytoplasmic. Residues 38-58 (TAILFTCCIIVTANNLIGDPI) traverse the membrane as a helical segment. Topologically, residues 59–114 (SCINDGAIPMHVINTFCWITYTYTIPGQQHRQIGTDVAGPGLGNEYGQEKRYHSYY) are extracellular. A helical transmembrane segment spans residues 115-135 (QWVPFVLFFQGLMFYVPHWVW). Topologically, residues 136–183 (KNMEDGKIRMITDGLRGMVSVPDDYRRDRQDRILKYFVNSLNTHNGYS) are cytoplasmic. A helical membrane pass occupies residues 184-204 (FAYFFCELLNFINVIVNIFMV). The Extracellular segment spans residues 205 to 272 (DKFLGGAFMS…VLALNILNEK (68 aa)). A helical membrane pass occupies residues 273–293 (IYIFLWFWFIILATISGVAVL). The Cytoplasmic segment spans residues 294–395 (YSLVVIMMPT…TFGGGKETET (102 aa)). Phosphoserine is present on residues Ser-366 and Ser-377. Tyr-381 carries the post-translational modification Phosphotyrosine.

Belongs to the pannexin family. In terms of assembly, heterooligomer of Inx2 (via cytoplasmic C-terminal region) and Inx3 (via cytoplasmic C-terminal region). As to expression, in ovary, expressed in nurse cells and follicle cells. Expressed in embryonic epithelial cells. Ubiquitously expressed in stage 5 embryos. Expressed in foregut and hindgut from stage 11-17 and in proventriculus, epidermis and CNS in stage 16 embryos (at protein level). Expressed in anterior and ventral regions in stage 8 embryos. Repeating epidermal pattern emerges at stage 11, refines to one or two cells at each side of the segment borders by stage 13. Expressed in the imaginal wing disk. In pupae, expressed in the CNS and in secondary and tertiary pigment cells of the retina.

It is found in the cell membrane. It localises to the cell junction. The protein resides in the gap junction. The protein localises to the cytoplasm. Its subcellular location is the lateral cell membrane. It is found in the apicolateral cell membrane. In terms of biological role, structural components of the gap junctions. Essential for proper epithelial development of the epidermis. The protein is Innexin inx3 (Inx3) of Drosophila melanogaster (Fruit fly).